A 340-amino-acid chain; its full sequence is Phenylalanine--tRNA ligase alpha subunit (340 aa).

Glutamate 254 contacts Mg(2+).

The protein belongs to the class-II aminoacyl-tRNA synthetase family. Phe-tRNA synthetase alpha subunit type 1 subfamily. Tetramer of two alpha and two beta subunits. The cofactor is Mg(2+).

The protein localises to the cytoplasm. The enzyme catalyses tRNA(Phe) + L-phenylalanine + ATP = L-phenylalanyl-tRNA(Phe) + AMP + diphosphate + H(+). This is Phenylalanine--tRNA ligase alpha subunit from Caldicellulosiruptor bescii (strain ATCC BAA-1888 / DSM 6725 / KCTC 15123 / Z-1320) (Anaerocellum thermophilum).